The sequence spans 266 residues: Protein crossbronx-like (266 aa).

A UBC core domain is found at 15-178 (KQGYHILAEY…VQEQAILSRN (164 aa)). The segment at 234–266 (SSRQLDEEEANQVEKLHRGRIPEHQREESEVSL) is disordered. The span at 245–266 (QVEKLHRGRIPEHQREESEVSL) shows a compositional bias: basic and acidic residues.

The protein belongs to the ubiquitin-conjugating enzyme family. FTS subfamily.

This Drosophila melanogaster (Fruit fly) protein is Protein crossbronx-like.